The chain runs to 274 residues: MGRSPCCEKDHTNKGAWTKEEDDKLISYIKAHGEGCWRSLPRSAGLQRCGKSCRLRWINYLRPDLKRGNFTLEEDDLIIKLHSLLGNKWSLIATRLPGRTDNEIKNYWNTHVKRKLLRKGIDPATHRPINETKTSQDSSDSSKTEDPLVKILSFGPQLEKIANFGDERIQKRVEYSVVEERCLDLNLELRISPPWQDKLHDERNLRFGRVKYRCSACRFGFGNGKECSCNNVKCQTEDSSSSSYSSTDISSSIGYDFLGLNNTRVLDFSTLEMK.

HTH myb-type domains follow at residues 9 to 61 (KDHT…INYL) and 62 to 116 (RPDL…KRKL). 2 DNA-binding regions (H-T-H motif) span residues 37–61 (WRSL…INYL) and 89–112 (WSLI…NTHV). Residues 123 to 144 (PATHRPINETKTSQDSSDSSKT) form a disordered region.

Mostly expressed in roots, and, to a lower extent, in stems, flower buds, and siliques.

The protein resides in the nucleus. This chain is Transcription factor MYB32 (MYB32), found in Arabidopsis thaliana (Mouse-ear cress).